The following is a 154-amino-acid chain: 6,7-dimethyl-8-ribityllumazine synthase (154 aa).

Residues 22–23 (FN), 56–58 (SWE), and 80–82 (VLI) contribute to the 5-amino-6-(D-ribitylamino)uracil site. 85–86 (AT) lines the (2S)-2-hydroxy-3-oxobutyl phosphate pocket. Histidine 88 acts as the Proton donor in catalysis. Residue phenylalanine 113 coordinates 5-amino-6-(D-ribitylamino)uracil. Arginine 127 serves as a coordination point for (2S)-2-hydroxy-3-oxobutyl phosphate. Residue lysine 135 coordinates 5-amino-6-(D-ribitylamino)uracil.

Belongs to the DMRL synthase family. Forms an icosahedral capsid composed of 60 subunits, arranged as a dodecamer of pentamers.

It carries out the reaction (2S)-2-hydroxy-3-oxobutyl phosphate + 5-amino-6-(D-ribitylamino)uracil = 6,7-dimethyl-8-(1-D-ribityl)lumazine + phosphate + 2 H2O + H(+). It functions in the pathway cofactor biosynthesis; riboflavin biosynthesis; riboflavin from 2-hydroxy-3-oxobutyl phosphate and 5-amino-6-(D-ribitylamino)uracil: step 1/2. In terms of biological role, catalyzes the formation of 6,7-dimethyl-8-ribityllumazine by condensation of 5-amino-6-(D-ribitylamino)uracil with 3,4-dihydroxy-2-butanone 4-phosphate. This is the penultimate step in the biosynthesis of riboflavin. This chain is 6,7-dimethyl-8-ribityllumazine synthase (ribH), found in Aquifex aeolicus (strain VF5).